Consider the following 538-residue polypeptide: Mitochondria-eating protein (538 aa).

Residues 1–273 form an interaction with YWHAG/14-3-3 protein gamma region; the sequence is MAENLKRLVS…PRSRSCSRSR (273 aa). A Phosphoserine modification is found at Ser-85. The segment at 92-137 is disordered; sequence GKPVDSKVPSLQNTFDRERRKDPSPRDRDMQQLDSNLNSTRSQLNQ. The segment covering 106-122 has biased composition (basic and acidic residues); sequence FDRERRKDPSPRDRDMQ. Coiled-coil stretches lie at residues 118–186 and 220–256; these read DRDM…ARHR and QRDT…RSSR. Residues 123–137 are compositionally biased toward polar residues; it reads QLDSNLNSTRSQLNQ. Ser-156 and Ser-159 each carry phosphoserine. Disordered stretches follow at residues 174-227 and 247-292; these read LKTL…EVTS and KSAL…NRSK. 2 stretches are compositionally biased toward basic and acidic residues: residues 181 to 209 and 216 to 227; these read EDAR…RRCE and RNADQRDTEVTS. Low complexity predominate over residues 253 to 278; that stretch reads RSSRSRSPSPAPRSRSCSRSRSASPS. Phosphoserine occurs at positions 285, 287, and 509.

Belongs to the MIEAP family. In terms of assembly, interacts (via coiled-coil domains) with BNIP3L (via BH3 domain). Interacts (via coiled-coil domains) with BNIP3 (via BH3 domain). Interacts with YWHAG/14-3-3 protein gamma; a protein that also plays a role in MALM.

It is found in the cytoplasm. Its subcellular location is the cytosol. It localises to the mitochondrion outer membrane. The protein resides in the mitochondrion matrix. Its function is as follows. Key regulator of mitochondrial quality that mediates the repairing or degradation of unhealthy mitochondria in response to mitochondrial damage. Mediator of mitochondrial protein catabolic process (also named MALM) by mediating the degradation of damaged proteins inside mitochondria by promoting the accumulation in the mitochondrial matrix of hydrolases that are characteristic of the lysosomal lumen. Also involved in mitochondrion degradation of damaged mitochondria by promoting the formation of vacuole-like structures (named MIV), which engulf and degrade unhealthy mitochondria by accumulating lysosomes. The physical interaction of SPATA18/MIEAP, BNIP3 and BNIP3L/NIX at the mitochondrial outer membrane regulates the opening of a pore in the mitochondrial double membrane in order to mediate the translocation of lysosomal proteins from the cytoplasm to the mitochondrial matrix. Binds cardiolipin. May form molecular condensates (non-membrane-bounded organelles) within mitochondria that compartmentalize and promote cardiolipin metabolism. This Macaca fascicularis (Crab-eating macaque) protein is Mitochondria-eating protein (SPATA18).